We begin with the raw amino-acid sequence, 1562 residues long: Cell surface antigen I/II (1562 aa).

Residues 1–38 (MKVKKTYGFRKSKISKTLCGAVLGTVAAVSVAGQKVFA) form the signal peptide. A compositionally biased stretch (low complexity) spans 42–54 (TTTSDVDTKVVGT). The tract at residues 42 to 91 (TTTSDVDTKVVGTQTGNPATNLPEAQGSASKEAEQSQNQAGETNGSIPVE) is disordered. The interval 60-551 (ATNLPEAQGS…SKAKYDQKIL (492 aa)) is helical. Over residues 76–87 (QSQNQAGETNGS) the composition is skewed to polar residues. Ag I/II A repeat units follow at residues 147-221 (KKTT…QKTN), 222-303 (AANQ…QEAN), 304-385 (AANE…KKAN), and 386-467 (AANE…QKDL). Disordered regions lie at residues 824-973 (VPKV…PTDP) and 1482-1509 (SNTVKTTTPEDPTDPTDPQDPSSPRTST). The span at 943-958 (PTPPTPTPDQPEPNKP) shows a compositional bias: pro residues. Residues 1500-1509 (QDPSSPRTST) show a composition bias toward low complexity. The short motif at 1529-1533 (LPNTG) is the LPXTG sorting signal element. The residue at position 1532 (Thr-1532) is a Pentaglycyl murein peptidoglycan amidated threonine. The propeptide at 1533–1562 (GVTNNAYMPLLGIIGLVTSFSLLGLKAKKD) is removed by sortase.

Belongs to the antigen I/II family. Detected as a 185 kDa cell surface protein, but also as 2 proteins in S.mutans culture supernatants of about 150 kDa (antigen I) and 50 kDa (antigen II); antigen II is only seen after proteolysis. Antigen I and II have the same N-terminus but different C-termini.

Its subcellular location is the secreted. The protein localises to the cell wall. Its function is as follows. Surface protein antigen implicated in dental caries. This Streptococcus mutans serotype c (strain ATCC 700610 / UA159) protein is Cell surface antigen I/II.